Here is a 113-residue protein sequence, read N- to C-terminus: UPF0102 protein Dgeo_1894 (113 aa).

This sequence belongs to the UPF0102 family.

The protein is UPF0102 protein Dgeo_1894 of Deinococcus geothermalis (strain DSM 11300 / CIP 105573 / AG-3a).